A 736-amino-acid polypeptide reads, in one-letter code: Elongation factor 2 (736 aa).

One can recognise a tr-type G domain in the interval 18 to 261 (EQIRNIGITA…MVVKHIPNPR (244 aa)). Residues 27 to 34 (AHVDHGKT), 93 to 97 (DTPGH), and 147 to 150 (NKID) contribute to the GTP site. Histidine 602 is modified (diphthamide).

It belongs to the TRAFAC class translation factor GTPase superfamily. Classic translation factor GTPase family. EF-G/EF-2 subfamily.

It is found in the cytoplasm. Catalyzes the GTP-dependent ribosomal translocation step during translation elongation. During this step, the ribosome changes from the pre-translocational (PRE) to the post-translocational (POST) state as the newly formed A-site-bound peptidyl-tRNA and P-site-bound deacylated tRNA move to the P and E sites, respectively. Catalyzes the coordinated movement of the two tRNA molecules, the mRNA and conformational changes in the ribosome. This chain is Elongation factor 2, found in Desulfurococcus amylolyticus (strain DSM 18924 / JCM 16383 / VKM B-2413 / 1221n) (Desulfurococcus kamchatkensis).